Consider the following 188-residue polypeptide: Elongation factor P (188 aa).

Lys-34 bears the N6-(3,6-diaminohexanoyl)-5-hydroxylysine mark.

It belongs to the elongation factor P family. In terms of processing, may be beta-lysylated on the epsilon-amino group of Lys-34 by the combined action of EpmA and EpmB, and then hydroxylated on the C5 position of the same residue by EpmC (if this protein is present). Lysylation is critical for the stimulatory effect of EF-P on peptide-bond formation. The lysylation moiety may extend toward the peptidyltransferase center and stabilize the terminal 3-CCA end of the tRNA. Hydroxylation of the C5 position on Lys-34 may allow additional potential stabilizing hydrogen-bond interactions with the P-tRNA.

Its subcellular location is the cytoplasm. It participates in protein biosynthesis; polypeptide chain elongation. Functionally, involved in peptide bond synthesis. Alleviates ribosome stalling that occurs when 3 or more consecutive Pro residues or the sequence PPG is present in a protein, possibly by augmenting the peptidyl transferase activity of the ribosome. Modification of Lys-34 is required for alleviation. In Glaesserella parasuis serovar 5 (strain SH0165) (Haemophilus parasuis), this protein is Elongation factor P.